A 261-amino-acid chain; its full sequence is Imidazole glycerol phosphate synthase subunit HisF (261 aa).

Catalysis depends on residues Asp-16 and Asp-135.

Belongs to the HisA/HisF family. As to quaternary structure, heterodimer of HisH and HisF.

It is found in the cytoplasm. The enzyme catalyses 5-[(5-phospho-1-deoxy-D-ribulos-1-ylimino)methylamino]-1-(5-phospho-beta-D-ribosyl)imidazole-4-carboxamide + L-glutamine = D-erythro-1-(imidazol-4-yl)glycerol 3-phosphate + 5-amino-1-(5-phospho-beta-D-ribosyl)imidazole-4-carboxamide + L-glutamate + H(+). It functions in the pathway amino-acid biosynthesis; L-histidine biosynthesis; L-histidine from 5-phospho-alpha-D-ribose 1-diphosphate: step 5/9. IGPS catalyzes the conversion of PRFAR and glutamine to IGP, AICAR and glutamate. The HisF subunit catalyzes the cyclization activity that produces IGP and AICAR from PRFAR using the ammonia provided by the HisH subunit. This chain is Imidazole glycerol phosphate synthase subunit HisF, found in Mycobacterium sp. (strain JLS).